Consider the following 1141-residue polypeptide: LRR receptor-like serine/threonine-protein kinase RGI1 (1141 aa).

The signal sequence occupies residues methionine 1–alanine 33. Over glutamate 34–leucine 726 the chain is Extracellular. A disulfide bridge links cysteine 69 with cysteine 77. Asparagine 71 carries an N-linked (GlcNAc...) asparagine glycan. LRR repeat units follow at residues glutamine 80 to phenylalanine 104, arginine 105 to cysteine 128, glycine 130 to leucine 152, arginine 153 to cysteine 176, lysine 178 to leucine 200, glycine 202 to cysteine 225, serine 226 to leucine 249, lysine 250 to cysteine 273, glutamate 275 to leucine 297, threonine 298 to cysteine 321, serine 322 to leucine 345, phenylalanine 347 to cysteine 369, serine 370 to threonine 392, threonine 394 to cysteine 417, threonine 418 to leucine 441, asparagine 443 to asparagine 464, cysteine 465 to leucine 489, lysine 490 to cysteine 513, serine 514 to leucine 537, serine 538 to leucine 561, serine 563 to cysteine 585, serine 586 to isoleucine 609, glutamate 610 to leucine 634, lysine 636 to isoleucine 657, and glutamate 658 to glutamine 682. N-linked (GlcNAc...) asparagine glycosylation occurs at asparagine 116. 2 consecutive short sequence motifs (small peptide recognition) follow at residues phenylalanine 185–aspartate 186 and arginine 207–glycine 210. Asparagine 227 is a glycosylation site (N-linked (GlcNAc...) asparagine). 2 short sequence motifs (small peptide recognition) span residues valine 230–glutamate 235 and tyrosine 258. Asparagine 272 carries an N-linked (GlcNAc...) asparagine glycan. The Small peptide recognition signature appears at phenylalanine 280 to tyrosine 282. Residue asparagine 320 is glycosylated (N-linked (GlcNAc...) asparagine). Short sequence motifs (small peptide recognition) lie at residues aspartate 328–leucine 331 and glutamate 350–methionine 352. Asparagine 368 carries N-linked (GlcNAc...) asparagine glycosylation. 2 consecutive short sequence motifs (small peptide recognition) follow at residues leucine 398–tryptophan 402 and aspartate 424–arginine 427. Residue asparagine 443 is glycosylated (N-linked (GlcNAc...) asparagine). The Small peptide recognition motif lies at lysine 446–isoleucine 450. N-linked (GlcNAc...) asparagine glycosylation occurs at asparagine 464. A Small peptide recognition motif is present at residues arginine 470–arginine 472. N-linked (GlcNAc...) asparagine glycosylation occurs at asparagine 523. N-linked (GlcNAc...) asparagine glycosylation occurs at asparagine 617. N-linked (GlcNAc...) asparagine glycosylation occurs at asparagine 664. Residues threonine 727–isoleucine 747 traverse the membrane as a helical segment. Residues arginine 748 to glutamate 1141 are Cytoplasmic-facing. Positions leucine 786 to alanine 1074 constitute a Protein kinase domain. ATP contacts are provided by residues isoleucine 792–valine 800 and lysine 814. Tyrosine 868 and tyrosine 906 each carry phosphotyrosine. Aspartate 919 (proton acceptor) is an active-site residue. Phosphotyrosine occurs at positions 962 and 969.

Belongs to the protein kinase superfamily. Ser/Thr protein kinase family. In terms of assembly, interacts with beet curly top virus AL4/C4. Binds to RGF peptides such as RGF1, GLV5/CLEL1/RGF2, GLV7/CLEL3/RGF3, GLV3/RGF4, GLV10/CLEL7/RGF5 and RGF10/CLELN; these interactions trigger the formation of heterodimers with SERK1, SERK2 or BAK1/SERK3 via LRR regions. Interacts with UBP13. In terms of processing, phosphorylated and ubiquitinated upon interaction with RGF1, thus leading to activation a subsequent degradation. Stabilized by UBP12 and UBP13-mediated deubiquitination. Post-translationally, autophosphorylated. As to expression, expressed in roots.

Its subcellular location is the cell membrane. It carries out the reaction L-seryl-[protein] + ATP = O-phospho-L-seryl-[protein] + ADP + H(+). It catalyses the reaction L-threonyl-[protein] + ATP = O-phospho-L-threonyl-[protein] + ADP + H(+). In terms of biological role, together with RGI2, RGI3, RGI4 and RGI5, acts as a receptor of RGF peptides (e.g. RGF1, GLV5/CLEL1/RGF2, GLV7/CLEL3/RGF3, GLV3/RGF4, GLV10/CLEL7/RGF5 and RGF10/CLELN), peptide hormones which maintain the postembryonic root stem cell niche by regulating the expression levels and patterns of the transcription factor PLETHORA (PLT, e.g. PLT1 and PLT2). Links RGF peptides signal with their downstream components. The protein is LRR receptor-like serine/threonine-protein kinase RGI1 of Arabidopsis thaliana (Mouse-ear cress).